Reading from the N-terminus, the 342-residue chain is Anthranilate phosphoribosyltransferase (342 aa).

5-phospho-alpha-D-ribose 1-diphosphate contacts are provided by residues G79, 82 to 83, T87, 89 to 92, 107 to 115, and S119; these read GD, NVST, and KHGNRAATS. Residue G79 participates in anthranilate binding. Residue S91 coordinates Mg(2+). N110 lines the anthranilate pocket. Position 165 (R165) interacts with anthranilate. Residues D224 and E225 each contribute to the Mg(2+) site.

The protein belongs to the anthranilate phosphoribosyltransferase family. As to quaternary structure, homodimer. The cofactor is Mg(2+).

It catalyses the reaction N-(5-phospho-beta-D-ribosyl)anthranilate + diphosphate = 5-phospho-alpha-D-ribose 1-diphosphate + anthranilate. It functions in the pathway amino-acid biosynthesis; L-tryptophan biosynthesis; L-tryptophan from chorismate: step 2/5. In terms of biological role, catalyzes the transfer of the phosphoribosyl group of 5-phosphorylribose-1-pyrophosphate (PRPP) to anthranilate to yield N-(5'-phosphoribosyl)-anthranilate (PRA). This Rubrobacter xylanophilus (strain DSM 9941 / JCM 11954 / NBRC 16129 / PRD-1) protein is Anthranilate phosphoribosyltransferase.